Reading from the N-terminus, the 396-residue chain is Elongation factor Tu (396 aa).

In terms of domain architecture, tr-type G spans 10–205 (KPHVNIGTIG…AVDESIPDPV (196 aa)). A G1 region spans residues 19-26 (GHVDHGKT). 19–26 (GHVDHGKT) provides a ligand contact to GTP. T26 contributes to the Mg(2+) binding site. Residues 62–66 (GITIN) form a G2 region. Positions 83-86 (DAPG) are G3. Residues 83 to 87 (DAPGH) and 138 to 141 (NKAD) each bind GTP. The G4 stretch occupies residues 138-141 (NKAD). The tract at residues 175 to 177 (SAL) is G5.

This sequence belongs to the TRAFAC class translation factor GTPase superfamily. Classic translation factor GTPase family. EF-Tu/EF-1A subfamily. In terms of assembly, monomer.

Its subcellular location is the cytoplasm. It catalyses the reaction GTP + H2O = GDP + phosphate + H(+). Its function is as follows. GTP hydrolase that promotes the GTP-dependent binding of aminoacyl-tRNA to the A-site of ribosomes during protein biosynthesis. This is Elongation factor Tu from Mycobacterium sp. (strain JLS).